A 316-amino-acid polypeptide reads, in one-letter code: Glutamyl endopeptidase (316 aa).

A signal peptide spans 1–30 (MVSKKSVKRGLITGLIGISIYSLGMHPAQA). Residues 31–94 (APSPHTPVSS…SPAKAPYSIK (64 aa)) constitute a propeptide that is removed on maturation. A disulfide bridge connects residues C126 and C142. Catalysis depends on charge relay system residues H141 and S261. A disulfide bond links C275 and C279.

It belongs to the peptidase S1B family.

Its subcellular location is the secreted. The catalysed reaction is Preferential cleavage: Glu-|-Xaa, Asp-|-Xaa.. Specific for hydrolysis of peptide bonds on the carboxyl side of acidic amino acid residues, with a strong preference for Glu. This chain is Glutamyl endopeptidase (blaSE), found in Bacillus licheniformis (strain ATCC 14580 / DSM 13 / JCM 2505 / CCUG 7422 / NBRC 12200 / NCIMB 9375 / NCTC 10341 / NRRL NRS-1264 / Gibson 46).